A 1267-amino-acid chain; its full sequence is MQPDFKKIHSFENNLINKRSLKDLMYQAFLNYGIVKSSIIADRVKNLTFHFATQSGVSLSVEDLRVPAKKRELIGLTRNEVETTQKRYEIGSITSVEKFQKTIDIWNNANNFLKDDVLTYFRESDPLNPLYIMAFSGARGNISQVRQLVGMRGLMSNPQGQIIDLPIKSNFREGLTVTEYIISSYGARKGLVDTALRTADSGYLTRRLVDVAQDIIVRESDCGTTEGLWATELASNNFLNLRGRLLAEPIFTQEGNLFAPANTEITETFLQTLKTLKDHSPIKVRSSLTCTSTRSVCQNCYGWHLSHSKLVDLGEAVGIVAAQSIGEPGTQLTMRTFHTGGVFSGDLTRQVRSPMEGKIEYWEGHKASLFRTMHGKMGFRLKEEVNLIIKNSFGTTISFEIPAESLLLVNTDQYVYENEIIAEIQKDTNLILEEEQKEIYSETSGEVFFNALDVKVQADKQGNTYKTNNKAGLIWILQGSFYELPAFSETLLKPGLNLSKNTLLSRTPLYNKYPGWVQIDKSDNGTGICVQNFSVTLTNAFINEKVENSSRLQIKTDNQDFQFQLTTEPNSVLKQGDTIAVLDDNTYRTTTGGIVTYSLENPQASKKRKSVKNLFKGYFYWIPEETFKFSTLDEVRLSFSKNESIVGVGEEIMPNTFSKVGGFFQIKEAEQEVTIKPGELFELTSAESQIFDKSDRFVKPGNFIVPGKIITQQLVYLEFFELNEKQYILARPVQVFEVPKEEDLSLSQSFFPYNSHEHIKLKVIKRVFYKNWEKIISNNGINLLQTFIVFDFKQEQQGLEPRLEFTPSKVPGKSFLKIALYEVIKTFENNRKSSHSSLPTTTRNFVSNKQYVASNTLIGQIETTAGLVNKLAAINPHLNSGNMKEVLILNPSDLKKVFCPNVELLKKVSVGDLVRIGTLLNDNVKSPYSGQILEIFEDHILIRLSQPYLISAGTILHATSNNLVKAGDILATLVYETIKTTDIVQGLPKVEELLEARKVLHNALLAPCPGYAYVRFNKHGESTVQLIGLDNEVQTLALKPGIKTKFNSGDFVEVSSALTDGLISPHTKLETLFSYFKNRYTSFEACKLSFKLLQLFLIGEIQRTYRSQGVDIADKHVELIVKQMTSKVCIEDSGTTTFLPGEVLNFQKMADIALVAENKGEIPPSYVPLLLGITKASLNSDSFISAASFQETTRVLTEAAIEGRKDWLTGLKENVIIGRLIPAGTGFNYLENQERLAREKGEIDATFHREAKPLSENILDLRLVKKE.

4 residues coordinate Zn(2+): cysteine 222, cysteine 290, cysteine 297, and cysteine 300.

It belongs to the RNA polymerase beta' chain family. RpoC2 subfamily. In terms of assembly, in plastids the minimal PEP RNA polymerase catalytic core is composed of four subunits: alpha, beta, beta', and beta''. When a (nuclear-encoded) sigma factor is associated with the core the holoenzyme is formed, which can initiate transcription. Zn(2+) is required as a cofactor.

It is found in the plastid. The protein localises to the chloroplast. It carries out the reaction RNA(n) + a ribonucleoside 5'-triphosphate = RNA(n+1) + diphosphate. DNA-dependent RNA polymerase catalyzes the transcription of DNA into RNA using the four ribonucleoside triphosphates as substrates. In Emiliania huxleyi (Coccolithophore), this protein is DNA-directed RNA polymerase subunit beta''.